The primary structure comprises 195 residues: Protein GrpE (195 aa).

This sequence belongs to the GrpE family. As to quaternary structure, homodimer.

Its subcellular location is the cytoplasm. Participates actively in the response to hyperosmotic and heat shock by preventing the aggregation of stress-denatured proteins, in association with DnaK and GrpE. It is the nucleotide exchange factor for DnaK and may function as a thermosensor. Unfolded proteins bind initially to DnaJ; upon interaction with the DnaJ-bound protein, DnaK hydrolyzes its bound ATP, resulting in the formation of a stable complex. GrpE releases ADP from DnaK; ATP binding to DnaK triggers the release of the substrate protein, thus completing the reaction cycle. Several rounds of ATP-dependent interactions between DnaJ, DnaK and GrpE are required for fully efficient folding. The sequence is that of Protein GrpE from Francisella tularensis subsp. novicida (strain U112).